A 205-amino-acid chain; its full sequence is High frequency lysogenization protein HflD homolog (205 aa).

It belongs to the HflD family.

The protein localises to the cytoplasm. Its subcellular location is the cell inner membrane. The polypeptide is High frequency lysogenization protein HflD homolog (Shewanella baltica (strain OS155 / ATCC BAA-1091)).